Reading from the N-terminus, the 179-residue chain is Transthyretin-like protein 46 (179 aa).

The N-terminal stretch at 1-17 (MNKLFVLLIALLGLTAA) is a signal peptide. Residues 144 to 179 (RRGGFNADYMDPDNSEKDQSKSSEESEDKEKTVETF) are disordered. Residues 157–179 (NSEKDQSKSSEESEDKEKTVETF) are compositionally biased toward basic and acidic residues.

This sequence belongs to the nematode transthyretin-like family.

Its subcellular location is the secreted. The protein is Transthyretin-like protein 46 (ttr-46) of Caenorhabditis elegans.